Consider the following 380-residue polypeptide: Cytochrome b (380 aa).

The next 4 helical transmembrane spans lie at 34-54 (FGSL…LLAM), 78-99 (WLIR…YFHI), 114-134 (WNTG…GYVL), and 179-199 (FFAL…IHLT). H84 and H98 together coordinate heme b. Residues H183 and H197 each contribute to the heme b site. Position 202 (H202) interacts with a ubiquinone. The next 4 helical transmembrane spans lie at 227–247 (TKDI…ALFS), 289–309 (LGGV…PLLH), 321–341 (LSQL…WIGS), and 348–368 (FIII…ILFP).

Belongs to the cytochrome b family. The cytochrome bc1 complex contains 11 subunits: 3 respiratory subunits (MT-CYB, CYC1 and UQCRFS1), 2 core proteins (UQCRC1 and UQCRC2) and 6 low-molecular weight proteins (UQCRH/QCR6, UQCRB/QCR7, UQCRQ/QCR8, UQCR10/QCR9, UQCR11/QCR10 and a cleavage product of UQCRFS1). This cytochrome bc1 complex then forms a dimer. Heme b serves as cofactor.

The protein localises to the mitochondrion inner membrane. Functionally, component of the ubiquinol-cytochrome c reductase complex (complex III or cytochrome b-c1 complex) that is part of the mitochondrial respiratory chain. The b-c1 complex mediates electron transfer from ubiquinol to cytochrome c. Contributes to the generation of a proton gradient across the mitochondrial membrane that is then used for ATP synthesis. The polypeptide is Cytochrome b (MT-CYB) (Pygoscelis papua (Gentoo penguin)).